A 202-amino-acid polypeptide reads, in one-letter code: Large ribosomal subunit protein bL25 (202 aa).

Belongs to the bacterial ribosomal protein bL25 family. CTC subfamily. Part of the 50S ribosomal subunit; part of the 5S rRNA/L5/L18/L25 subcomplex. Contacts the 5S rRNA. Binds to the 5S rRNA independently of L5 and L18.

This is one of the proteins that binds to the 5S RNA in the ribosome where it forms part of the central protuberance. The protein is Large ribosomal subunit protein bL25 of Chlorobium luteolum (strain DSM 273 / BCRC 81028 / 2530) (Pelodictyon luteolum).